The following is a 257-amino-acid chain: Tryptophan synthase alpha chain (257 aa).

Residues Glu-46 and Asp-57 each act as proton acceptor in the active site.

The protein belongs to the TrpA family. Tetramer of two alpha and two beta chains.

It carries out the reaction (1S,2R)-1-C-(indol-3-yl)glycerol 3-phosphate + L-serine = D-glyceraldehyde 3-phosphate + L-tryptophan + H2O. The protein operates within amino-acid biosynthesis; L-tryptophan biosynthesis; L-tryptophan from chorismate: step 5/5. Its function is as follows. The alpha subunit is responsible for the aldol cleavage of indoleglycerol phosphate to indole and glyceraldehyde 3-phosphate. In Parabacteroides distasonis (strain ATCC 8503 / DSM 20701 / CIP 104284 / JCM 5825 / NCTC 11152), this protein is Tryptophan synthase alpha chain.